Consider the following 481-residue polypeptide: MSQDLWSFCLSRLEHELPPQQFNTWIKTLQADEEKAGASVALRLVAPSRFVLQWVRERYLRRIGELGAEFHGAPIEIELVLPAAGAARPAARPVIGSGPVAGPAPAPTPSQAPAATAAAPAVVTRPAEPESSIVTASDLAYEKTRLNADFTFDTLVTGRANDLARAAAMQVAQNPGTSYNPLFVYGGVGLGKTHLVHAIGNAVYRHNPRAVIRYVHVEDYYADVVRAYQQKSFDAFKRYYRSLDLLLIDDIQFFNNKNRTQEEFFHAFNALTEARKQIVITCDTYPKDIQGLEDRLISRFDWGLTVQIEPPELEMRVAILQKKAEALRVDLHDDVAFLIAKNLRSNVRELEGALNKVVAFARFHGRGITLEVAKDALKDLLNAHNRQLTIEHIQKTVADYYKIKVADMHSKKRTRVIARPRQVAMWLAKDLTPMSLPAIGEAFGGRDHTTVMHACRTIAELRLGDHQLNHDVHVLTQVLRG.

Positions 1–74 are domain I, interacts with DnaA modulators; that stretch reads MSQDLWSFCL…ELGAEFHGAP (74 aa). Residues 74-144 form a domain II region; the sequence is PIEIELVLPA…TASDLAYEKT (71 aa). The tract at residues 101 to 123 is disordered; the sequence is AGPAPAPTPSQAPAATAAAPAVV. A compositionally biased stretch (low complexity) spans 111–123; the sequence is QAPAATAAAPAVV. The domain III, AAA+ region stretch occupies residues 145 to 361; it reads RLNADFTFDT…GALNKVVAFA (217 aa). Positions 189, 191, 192, and 193 each coordinate ATP. Residues 362–481 form a domain IV, binds dsDNA region; that stretch reads RFHGRGITLE…VHVLTQVLRG (120 aa).

The protein belongs to the DnaA family. As to quaternary structure, oligomerizes as a right-handed, spiral filament on DNA at oriC.

Its subcellular location is the cytoplasm. In terms of biological role, plays an essential role in the initiation and regulation of chromosomal replication. ATP-DnaA binds to the origin of replication (oriC) to initiate formation of the DNA replication initiation complex once per cell cycle. Binds the DnaA box (a 9 base pair repeat at the origin) and separates the double-stranded (ds)DNA. Forms a right-handed helical filament on oriC DNA; dsDNA binds to the exterior of the filament while single-stranded (ss)DNA is stabiized in the filament's interior. The ATP-DnaA-oriC complex binds and stabilizes one strand of the AT-rich DNA unwinding element (DUE), permitting loading of DNA polymerase. After initiation quickly degrades to an ADP-DnaA complex that is not apt for DNA replication. Binds acidic phospholipids. This is Chromosomal replication initiator protein DnaA from Aromatoleum aromaticum (strain DSM 19018 / LMG 30748 / EbN1) (Azoarcus sp. (strain EbN1)).